Reading from the N-terminus, the 618-residue chain is Nuclear cap-binding protein subunit 3 (618 aa).

Residues 1-53 (MAAVRGLRVSVKAGGGAEPEPMEVEEGEVEAAAGRTSPVEATADQTSPREVVP) are disordered. The span at 20-29 (EPMEVEEGEV) shows a compositional bias: acidic residues. Positions 117–178 (ETLYICGVDE…LSSKPTNEKG (62 aa)) are RNA recognition motif (RRM) domain. A WLDD motif; essential for 7-methylguanosine-containing mRNA cap binding motif is present at residues 146-149 (WLDD). Disordered regions lie at residues 170-250 (SSKP…DLRP), 342-366 (PEEP…DDRV), and 426-618 (QLKT…DTDS). Residues 174–188 (TNEKGQRKKDGEHRS) show a composition bias toward basic and acidic residues. Over residues 205–223 (DETEEGEVEEDNPNDAEVE) the composition is skewed to acidic residues. Residues 231–240 (PPETLSQAEQ) are compositionally biased toward polar residues. Acidic residues predominate over residues 344 to 365 (EPIEEEEEEEEEEEEDMDEDDR). Positions 436-450 (SDSAGNSVKSRIGSK) are enriched in polar residues. Residues 451-468 (SHSEKPADVRLILEEKRQ) are compositionally biased toward basic and acidic residues. Low complexity predominate over residues 469 to 481 (STASRQQSSSSGK). 3 stretches are compositionally biased toward basic and acidic residues: residues 507–517 (SRREPLSDVHS), 550–562 (PKEK…KSGE), and 583–596 (IKEK…KSRL). The segment covering 609–618 (ESSSGSDTDS) has biased composition (low complexity).

The protein belongs to the NCBP3 family. Component of an alternative cap-binding complex (CBC) composed of NCBP1/CBP80 and NCBP3.

The protein resides in the nucleus. The protein localises to the cytoplasm. In terms of biological role, associates with NCBP1/CBP80 to form an alternative cap-binding complex (CBC) which plays a key role in mRNA export. NCBP3 serves as adapter protein linking the capped RNAs (m7GpppG-capped RNA) to NCBP1/CBP80. Unlike the conventional CBC with NCBP2 which binds both small nuclear RNA (snRNA) and messenger (mRNA) and is involved in their export from the nucleus, the alternative CBC with NCBP3 does not bind snRNA and associates only with mRNA thereby playing a role in only mRNA export. The sequence is that of Nuclear cap-binding protein subunit 3 from Xenopus laevis (African clawed frog).